The chain runs to 288 residues: NAD(P)H-hydrate epimerase (288 aa).

Residues 1–48 (MSALRALLGLGLLAAGSRLRRVPGRAGACPAGSAWWEARRPHSGGGGE) constitute a mitochondrion transit peptide. One can recognise a YjeF N-terminal domain in the interval 65-275 (AQAVDEELFN…ALEKKYQLNL (211 aa)). 119-123 (NNGGD) provides a ligand contact to (6S)-NADPHX. Asn-120 lines the K(+) pocket. Lys-144 is subject to N6-succinyllysine. K(+) is bound at residue Asp-185. (6S)-NADPHX contacts are provided by residues 189–195 (GFSFKGD) and Asp-218. K(+) is bound at residue Ser-221.

It belongs to the NnrE/AIBP family. As to quaternary structure, homodimer. Interacts with APOA1 and APOA2. Requires K(+) as cofactor. Post-translationally, undergoes physiological phosphorylation during sperm capacitation, downstream to PKA activation.

It is found in the mitochondrion. Its subcellular location is the secreted. The enzyme catalyses (6R)-NADHX = (6S)-NADHX. It carries out the reaction (6R)-NADPHX = (6S)-NADPHX. Catalyzes the epimerization of the S- and R-forms of NAD(P)HX, a damaged form of NAD(P)H that is a result of enzymatic or heat-dependent hydration. This is a prerequisite for the S-specific NAD(P)H-hydrate dehydratase to allow the repair of both epimers of NAD(P)HX. Accelerates cholesterol efflux from endothelial cells to high-density lipoprotein (HDL) and thereby regulates angiogenesis. The polypeptide is NAD(P)H-hydrate epimerase (Canis lupus familiaris (Dog)).